The sequence spans 369 residues: DNA replication and repair protein RecF (369 aa).

30–37 (GDNGSGKT) provides a ligand contact to ATP.

It belongs to the RecF family.

The protein resides in the cytoplasm. The RecF protein is involved in DNA metabolism; it is required for DNA replication and normal SOS inducibility. RecF binds preferentially to single-stranded, linear DNA. It also seems to bind ATP. In Pseudomonas aeruginosa (strain LESB58), this protein is DNA replication and repair protein RecF.